The following is a 211-amino-acid chain: Recombination protein RecR (211 aa).

The C4-type zinc finger occupies 70–85 (CRECFLITDREVCPIC). The Toprim domain maps to 93-190 (KFICVVEESQ…KITRTAYGFQ (98 aa)).

It belongs to the RecR family.

Functionally, may play a role in DNA repair. It seems to be involved in an RecBC-independent recombinational process of DNA repair. It may act with RecF and RecO. In Aquifex aeolicus (strain VF5), this protein is Recombination protein RecR.